The sequence spans 142 residues: Hemoglobin subunit alpha (142 aa).

The Globin domain maps to 2–142; sequence VLSPADKTNV…VSTVLTSKYR (141 aa). Ser4 is subject to Phosphoserine. Lys8 bears the N6-succinyllysine mark. Thr9 is subject to Phosphothreonine. Residue Lys12 is modified to N6-succinyllysine. The residue at position 17 (Lys17) is an N6-acetyllysine; alternate. Position 17 is an N6-succinyllysine; alternate (Lys17). Tyr25 is subject to Phosphotyrosine. At Ser36 the chain carries Phosphoserine. N6-succinyllysine is present on Lys41. At Ser50 the chain carries Phosphoserine. Position 59 (His59) interacts with O2. His88 is a heme b binding site. Residue Ser103 is modified to Phosphoserine. Thr109 is modified (phosphothreonine). Residue Ser125 is modified to Phosphoserine. Thr135 and Thr138 each carry phosphothreonine. Ser139 bears the Phosphoserine mark.

Belongs to the globin family. In terms of assembly, heterotetramer of two alpha chains and two beta chains. As to expression, red blood cells.

In terms of biological role, involved in oxygen transport from the lung to the various peripheral tissues. Functionally, hemopressin acts as an antagonist peptide of the cannabinoid receptor CNR1. Hemopressin-binding efficiently blocks cannabinoid receptor CNR1 and subsequent signaling. The polypeptide is Hemoglobin subunit alpha (HBA) (Ailuropoda melanoleuca (Giant panda)).